The chain runs to 238 residues: Ribitol-5-phosphate cytidylyltransferase 2 (238 aa).

CTP-binding positions include Leu-7–Gly-10 and Gly-81–Thr-87.

The protein belongs to the IspD/TarI cytidylyltransferase family. TarI subfamily.

It catalyses the reaction D-ribitol 5-phosphate + CTP + H(+) = CDP-L-ribitol + diphosphate. The protein operates within cell wall biogenesis; poly(ribitol phosphate) teichoic acid biosynthesis. Functionally, catalyzes the transfer of the cytidylyl group of CTP to D-ribitol 5-phosphate. The sequence is that of Ribitol-5-phosphate cytidylyltransferase 2 from Staphylococcus aureus (strain bovine RF122 / ET3-1).